Consider the following 245-residue polypeptide: Probable transcriptional regulatory protein MARTH_orf271 (245 aa).

This sequence belongs to the TACO1 family.

The protein localises to the cytoplasm. In Metamycoplasma arthritidis (strain 158L3-1) (Mycoplasma arthritidis), this protein is Probable transcriptional regulatory protein MARTH_orf271.